Here is a 120-residue protein sequence, read N- to C-terminus: NAD(P)H-quinone oxidoreductase subunit 3, chloroplastic (120 aa).

3 consecutive transmembrane segments (helical) span residues 9–29 (IFWA…LISG), 64–84 (MFAL…PWAM), and 88–108 (VLGV…ILGL).

This sequence belongs to the complex I subunit 3 family. As to quaternary structure, NDH is composed of at least 16 different subunits, 5 of which are encoded in the nucleus.

Its subcellular location is the plastid. It localises to the chloroplast thylakoid membrane. The catalysed reaction is a plastoquinone + NADH + (n+1) H(+)(in) = a plastoquinol + NAD(+) + n H(+)(out). The enzyme catalyses a plastoquinone + NADPH + (n+1) H(+)(in) = a plastoquinol + NADP(+) + n H(+)(out). In terms of biological role, NDH shuttles electrons from NAD(P)H:plastoquinone, via FMN and iron-sulfur (Fe-S) centers, to quinones in the photosynthetic chain and possibly in a chloroplast respiratory chain. The immediate electron acceptor for the enzyme in this species is believed to be plastoquinone. Couples the redox reaction to proton translocation, and thus conserves the redox energy in a proton gradient. The polypeptide is NAD(P)H-quinone oxidoreductase subunit 3, chloroplastic (Lobularia maritima (Sweet alyssum)).